Reading from the N-terminus, the 310-residue chain is 4-hydroxythreonine-4-phosphate dehydrogenase (310 aa).

Residue Thr129 coordinates substrate. 3 residues coordinate a divalent metal cation: His158, His202, and His250. Positions 258, 267, and 276 each coordinate substrate.

It belongs to the PdxA family. In terms of assembly, homodimer. It depends on a divalent metal cation as a cofactor.

The protein localises to the cytoplasm. The enzyme catalyses 4-(phosphooxy)-L-threonine + NAD(+) = 3-amino-2-oxopropyl phosphate + CO2 + NADH. It functions in the pathway cofactor biosynthesis; pyridoxine 5'-phosphate biosynthesis; pyridoxine 5'-phosphate from D-erythrose 4-phosphate: step 4/5. In terms of biological role, catalyzes the NAD(P)-dependent oxidation of 4-(phosphooxy)-L-threonine (HTP) into 2-amino-3-oxo-4-(phosphooxy)butyric acid which spontaneously decarboxylates to form 3-amino-2-oxopropyl phosphate (AHAP). This Hydrogenobaculum sp. (strain Y04AAS1) protein is 4-hydroxythreonine-4-phosphate dehydrogenase.